The sequence spans 400 residues: Enoyl-[acyl-carrier-protein] reductase [NADH] (400 aa).

Residues 48-53, 74-75, 111-112, and 139-140 contribute to the NAD(+) site; these read GASTGY, FE, DA, and LA. Tyr-225 is a binding site for substrate. Tyr-235 acts as the Proton donor in catalysis. NAD(+)-binding positions include Lys-244 and 273–275; that span reads VVT.

Belongs to the TER reductase family. In terms of assembly, monomer.

The enzyme catalyses a 2,3-saturated acyl-[ACP] + NAD(+) = a (2E)-enoyl-[ACP] + NADH + H(+). It participates in lipid metabolism; fatty acid biosynthesis. Involved in the final reduction of the elongation cycle of fatty acid synthesis (FAS II). Catalyzes the reduction of a carbon-carbon double bond in an enoyl moiety that is covalently linked to an acyl carrier protein (ACP). The sequence is that of Enoyl-[acyl-carrier-protein] reductase [NADH] from Burkholderia ambifaria (strain ATCC BAA-244 / DSM 16087 / CCUG 44356 / LMG 19182 / AMMD) (Burkholderia cepacia (strain AMMD)).